The sequence spans 426 residues: Serine--tRNA ligase (426 aa).

An L-serine-binding site is contributed by 233–235 (TAE). Residue 264 to 266 (RSE) participates in ATP binding. E287 serves as a coordination point for L-serine. 351-354 (EISS) contributes to the ATP binding site. Residue S387 coordinates L-serine.

This sequence belongs to the class-II aminoacyl-tRNA synthetase family. Type-1 seryl-tRNA synthetase subfamily. In terms of assembly, homodimer. The tRNA molecule binds across the dimer.

The protein localises to the cytoplasm. It carries out the reaction tRNA(Ser) + L-serine + ATP = L-seryl-tRNA(Ser) + AMP + diphosphate + H(+). It catalyses the reaction tRNA(Sec) + L-serine + ATP = L-seryl-tRNA(Sec) + AMP + diphosphate + H(+). It participates in aminoacyl-tRNA biosynthesis; selenocysteinyl-tRNA(Sec) biosynthesis; L-seryl-tRNA(Sec) from L-serine and tRNA(Sec): step 1/1. Its function is as follows. Catalyzes the attachment of serine to tRNA(Ser). Is also able to aminoacylate tRNA(Sec) with serine, to form the misacylated tRNA L-seryl-tRNA(Sec), which will be further converted into selenocysteinyl-tRNA(Sec). The sequence is that of Serine--tRNA ligase from Clostridium botulinum (strain 657 / Type Ba4).